A 629-amino-acid chain; its full sequence is D-proline reductase proprotein PrdA (629 aa).

Cys425 (covalent intermediate with substrate; via pyruvic acid) is an active-site residue. Cys425 carries the post-translational modification Pyruvic acid (Cys).

Consists of 3 subunits of 23, 26 and 45 kDa (alpha, gamma and beta respectively). The molecular weight of the complex is approximately 870 kDa, suggesting a decameric structure, if all 3 subunits are present in equal stoichiometry. Post-translationally, the peptide chain is cleaved into beta and alpha chains, and the alpha chain N-terminal cysteine is deaminated and oxidized to form a reactive pyruvoyl group.

The protein localises to the cytoplasm. The enzyme catalyses [PrdC protein]-Se-L-selenocysteinyl-S-L-cysteine + 5-aminopentanoate = [PrdC protein]-L-selenocysteine/L-cysteine + D-proline. Functionally, D-proline reductase catalyzes the reductive cleavage of a C-N bond in D-proline resulting in the formation of 5-aminovalerate. The alpha subunit has been shown to bind D-proline, presumably via the pyruvoyl group. The polypeptide is D-proline reductase proprotein PrdA (prdA) (Acetoanaerobium sticklandii (strain ATCC 12662 / DSM 519 / JCM 1433 / CCUG 9281 / NCIMB 10654 / HF) (Clostridium sticklandii)).